The sequence spans 280 residues: 3-methyl-2-oxobutanoate hydroxymethyltransferase (280 aa).

The Mg(2+) site is built by Asp61 and Asp100. 3-methyl-2-oxobutanoate-binding positions include 61–62, Asp100, and Lys130; that span reads DS. Glu132 is a Mg(2+) binding site. Catalysis depends on Glu198, which acts as the Proton acceptor.

Belongs to the PanB family. In terms of assembly, homodecamer; pentamer of dimers. Mg(2+) is required as a cofactor.

The protein resides in the cytoplasm. The enzyme catalyses 3-methyl-2-oxobutanoate + (6R)-5,10-methylene-5,6,7,8-tetrahydrofolate + H2O = 2-dehydropantoate + (6S)-5,6,7,8-tetrahydrofolate. It participates in cofactor biosynthesis; (R)-pantothenate biosynthesis; (R)-pantoate from 3-methyl-2-oxobutanoate: step 1/2. Catalyzes the reversible reaction in which hydroxymethyl group from 5,10-methylenetetrahydrofolate is transferred onto alpha-ketoisovalerate to form ketopantoate. The polypeptide is 3-methyl-2-oxobutanoate hydroxymethyltransferase (Mycolicibacterium vanbaalenii (strain DSM 7251 / JCM 13017 / BCRC 16820 / KCTC 9966 / NRRL B-24157 / PYR-1) (Mycobacterium vanbaalenii)).